A 355-amino-acid chain; its full sequence is Peptide chain release factor 1 (355 aa).

Gln-233 is modified (N5-methylglutamine).

Belongs to the prokaryotic/mitochondrial release factor family. In terms of processing, methylated by PrmC. Methylation increases the termination efficiency of RF1.

The protein localises to the cytoplasm. Its function is as follows. Peptide chain release factor 1 directs the termination of translation in response to the peptide chain termination codons UAG and UAA. This Dehalococcoides mccartyi (strain ATCC BAA-2100 / JCM 16839 / KCTC 5957 / BAV1) protein is Peptide chain release factor 1.